The following is a 168-amino-acid chain: 2-C-methyl-D-erythritol 2,4-cyclodiphosphate synthase (168 aa).

The a divalent metal cation site is built by Asp-11 and His-13. 4-CDP-2-C-methyl-D-erythritol 2-phosphate-binding positions include 11 to 13 (DVH) and 41 to 42 (HS). His-49 is an a divalent metal cation binding site. 4-CDP-2-C-methyl-D-erythritol 2-phosphate-binding positions include 63-65 (DIG), 68-72 (FPDTD), 139-142 (TTTE), Phe-146, and Arg-149.

It belongs to the IspF family. As to quaternary structure, homotrimer. It depends on a divalent metal cation as a cofactor.

The catalysed reaction is 4-CDP-2-C-methyl-D-erythritol 2-phosphate = 2-C-methyl-D-erythritol 2,4-cyclic diphosphate + CMP. Its pathway is isoprenoid biosynthesis; isopentenyl diphosphate biosynthesis via DXP pathway; isopentenyl diphosphate from 1-deoxy-D-xylulose 5-phosphate: step 4/6. Involved in the biosynthesis of isopentenyl diphosphate (IPP) and dimethylallyl diphosphate (DMAPP), two major building blocks of isoprenoid compounds. Catalyzes the conversion of 4-diphosphocytidyl-2-C-methyl-D-erythritol 2-phosphate (CDP-ME2P) to 2-C-methyl-D-erythritol 2,4-cyclodiphosphate (ME-CPP) with a corresponding release of cytidine 5-monophosphate (CMP). The protein is 2-C-methyl-D-erythritol 2,4-cyclodiphosphate synthase of Psychrobacter cryohalolentis (strain ATCC BAA-1226 / DSM 17306 / VKM B-2378 / K5).